The chain runs to 513 residues: MKQLHVQKYLEKVRSRKQHFLYPLLFKEYIYAFAHDYGLNGSIFYEPTEILGNDNKSSSVLVKRLIIRMYQQNYLINSTNHSNQNRFLGHNNYFYSRFFSQMISESFAVIMEILFSLRLVSSSEKKEIPQFHNLRSIHSIFPFLEDKLSHLNSISDILIPHPIHLEILVQILQCRIQDVPSLHLLRFFLHEYHNWNSLITSKKSIYVFSKENKRLFRLLYNFYVFECEFVFVFLRKQSSYLQLTSFGTFLERIHFYGKIEHLLVVYRNFFNKTLWFFTDPFMHYVRYQGKAILASKGTHLFMKKWKCYLVNFWQYYFHFWSQPHRIHINQLSNYSFHFLGYLSSLLRNPLVVRNQMLENSYLIDTVMTKFDTIXPVDPLIGSLSKAKFXTLLGHPISKPIWTDLSDCDIIDRFGRICRXLSHYYSGSSKKRTLYRIKYILRFSCARTLARXHKSTVRTFMQRLGSVLLEEFFTEEEQVLSLIFPKTTPFSLHGSHRERIWYLDIIRINDLVNH.

This sequence belongs to the intron maturase 2 family. MatK subfamily.

The protein localises to the plastid. The protein resides in the chloroplast. Functionally, usually encoded in the trnK tRNA gene intron. Probably assists in splicing its own and other chloroplast group II introns. This Typha latifolia (Bulrush) protein is Maturase K.